The following is a 628-amino-acid chain: 1-deoxy-D-xylulose-5-phosphate synthase (628 aa).

Thiamine diphosphate-binding positions include His-80 and 121–123 (GHS). Residue Asp-152 participates in Mg(2+) binding. Thiamine diphosphate contacts are provided by residues 153–154 (GG), Asn-181, Tyr-289, and Glu-370. Asn-181 is a binding site for Mg(2+).

The protein belongs to the transketolase family. DXPS subfamily. In terms of assembly, homodimer. It depends on Mg(2+) as a cofactor. Requires thiamine diphosphate as cofactor.

It carries out the reaction D-glyceraldehyde 3-phosphate + pyruvate + H(+) = 1-deoxy-D-xylulose 5-phosphate + CO2. It functions in the pathway metabolic intermediate biosynthesis; 1-deoxy-D-xylulose 5-phosphate biosynthesis; 1-deoxy-D-xylulose 5-phosphate from D-glyceraldehyde 3-phosphate and pyruvate: step 1/1. In terms of biological role, catalyzes the acyloin condensation reaction between C atoms 2 and 3 of pyruvate and glyceraldehyde 3-phosphate to yield 1-deoxy-D-xylulose-5-phosphate (DXP). The sequence is that of 1-deoxy-D-xylulose-5-phosphate synthase from Alkalilimnicola ehrlichii (strain ATCC BAA-1101 / DSM 17681 / MLHE-1).